Consider the following 207-residue polypeptide: Ras-related protein Rab-7a (207 aa).

Thr-2 bears the N-acetylthreonine mark. GTP-binding residues include Ser-17, Gly-18, Val-19, Gly-20, Lys-21, Thr-22, Ser-23, Ser-34, Asn-35, Tyr-37, and Thr-40. Position 22 (Thr-22) interacts with Mg(2+). The Switch 1 motif lies at 28–41; sequence YVNKKFSNQYKATI. Mg(2+)-binding residues include Thr-40 and Asp-63. Gly-66 is a GTP binding site. The short motif at 67–82 is the Switch 2 element; that stretch reads QERFQSLSVAFYRGAD. The residue at position 72 (Ser-72) is a Phosphoserine. The GTP site is built by Asn-125, Lys-126, Asp-128, Ala-156, and Lys-157. Glycyl lysine isopeptide (Lys-Gly) (interchain with G-Cter in ubiquitin) cross-links involve residues Lys-191 and Lys-194. 2 S-geranylgeranyl cysteine lipidation sites follow: Cys-205 and Cys-207. Cys-207 is subject to Cysteine methyl ester.

It belongs to the small GTPase superfamily. Rab family. In terms of assembly, interacts with NTRK1/TRKA. Interacts with RILP. Interacts with PSMA7. Interacts with RNF115. Interacts with FYCO1. Interacts with the PIK3C3/VPS34-PIK3R4 complex. The GTP-bound form interacts with OSBPL1A. The GTP-bound form interacts with RAC1. Interacts with CLN3. Interacts with CHM, the substrate-binding subunit of the Rab geranylgeranyltransferase complex. Interacts with C9orf72. Does not interact with HPS4 and the BLOC-3 complex (heterodimer of HPS1 and HPS4). Interacts with CLN5. Interacts with PLEKHM1 (via N- and C-terminus). Interacts with PRPH; the interaction is direct. Interacts with VPS13A. The GDP-bound form interacts with RIMOC1. Interacts with the MON1A-CCZ1B complex and this interaction is enhanced in the presence of RIMOC1. Interacts with VPS39 and VPS41. Forms a ternary complex with LAMP2 and RUFY4; the interaction with LAMP2 is mediated by RUFY4 (via RUN and coiled coil domains). Requires Mg(2+) as cofactor. Deubiquitination at Lys-191 and Lys-194 by USP32. In terms of processing, phosphorylated at Ser-72 by LRRK1; phosphorylation is dependent on protein kinase C (PKC) activation of LRRK1. Post-translationally, prenylated. Prenylation is required for association with cellular membranes.

It is found in the cytoplasmic vesicle. The protein resides in the phagosome membrane. The protein localises to the late endosome membrane. Its subcellular location is the lysosome membrane. It localises to the melanosome membrane. It is found in the autophagosome membrane. The protein resides in the lipid droplet. The protein localises to the endosome membrane. Its subcellular location is the mitochondrion membrane. It carries out the reaction GTP + H2O = GDP + phosphate + H(+). Regulated by guanine nucleotide exchange factors (GEFs) which promote the exchange of bound GDP for free GTP. Regulated by GTPase activating proteins (GAPs) which increase the GTP hydrolysis activity. Inhibited by GDP dissociation inhibitors (GDIs). Functionally, the small GTPases Rab are key regulators of intracellular membrane trafficking, from the formation of transport vesicles to their fusion with membranes. Rabs cycle between an inactive GDP-bound form and an active GTP-bound form that is able to recruit to membranes different sets of downstream effectors directly responsible for vesicle formation, movement, tethering and fusion. In its active state, RAB7A binds to a variety of effector proteins playing a key role in the regulation of endo-lysosomal trafficking. Governs early-to-late endosomal maturation, microtubule minus-end as well as plus-end directed endosomal migration and positioning, and endosome-lysosome transport through different protein-protein interaction cascades. Also plays a central role in growth-factor-mediated cell signaling, nutrient-transporter-mediated nutrient uptake, neurotrophin transport in the axons of neurons and lipid metabolism. Also involved in regulation of some specialized endosomal membrane trafficking, such as maturation of melanosomes, pathogen-induced phagosomes (or vacuoles) and autophagosomes. Plays a role in the maturation and acidification of phagosomes that engulf pathogens, such as S.aureus and Mycobacteria. Plays a role in the fusion of phagosomes with lysosomes. In concert with RAC1, plays a role in regulating the formation of RBs (ruffled borders) in osteoclasts. Controls the endosomal trafficking and neurite outgrowth signaling of NTRK1/TRKA. Regulates the endocytic trafficking of the EGF-EGFR complex by regulating its lysosomal degradation. Involved in the ADRB2-stimulated lipolysis through lipophagy, a cytosolic lipase-independent autophagic pathway. Required for the exosomal release of SDCBP, CD63 and syndecan. Required for vesicular trafficking and cell surface expression of ACE2. May play a role in PRPH neuronal intermediate filament assembly. The protein is Ras-related protein Rab-7a (RAB7A) of Oryctolagus cuniculus (Rabbit).